The chain runs to 2267 residues: Acetyl-CoA carboxylase 1 (2267 aa).

The 507-residue stretch at Pro38–Ala544 folds into the Biotin carboxylation domain. Positions Pro190–Val384 constitute an ATP-grasp domain. Cys216 to Leu273 is a binding site for ATP. 3 residues coordinate Mg(2+): Glu339, Glu353, and Asn355. Residues Glu339, Glu353, and Asn355 each coordinate Mn(2+). The active site involves Arg357. The Biotinyl-binding domain maps to Leu671–Asp745. At Lys712 the chain carries N6-biotinyllysine. The region spanning Pro1502–Lys1843 is the CoA carboxyltransferase N-terminal domain. The tract at residues Pro1502 to Glu2163 is carboxyltransferase. Residues Arg1752, Lys2053, and Arg2055 each contribute to the CoA site. The region spanning Pro1847–Glu2163 is the CoA carboxyltransferase C-terminal domain.

Homodimer. Mg(2+) serves as cofactor. Requires Mn(2+) as cofactor. It depends on biotin as a cofactor.

Its subcellular location is the cytoplasm. The protein localises to the cytosol. It carries out the reaction hydrogencarbonate + acetyl-CoA + ATP = malonyl-CoA + ADP + phosphate + H(+). The enzyme catalyses N(6)-biotinyl-L-lysyl-[protein] + hydrogencarbonate + ATP = N(6)-carboxybiotinyl-L-lysyl-[protein] + ADP + phosphate + H(+). It participates in lipid metabolism; malonyl-CoA biosynthesis; malonyl-CoA from acetyl-CoA: step 1/1. In terms of biological role, multifunctional enzyme that catalyzes the carboxylation of acetyl-CoA, forming malonyl-CoA, which is used in the plastid for fatty acid synthesis and in the cytosol in various biosynthetic pathways including fatty acid elongation. The sequence is that of Acetyl-CoA carboxylase 1 (ACC1) from Oryza sativa subsp. japonica (Rice).